A 239-amino-acid chain; its full sequence is Sugar fermentation stimulation protein homolog (239 aa).

It belongs to the SfsA family.

The chain is Sugar fermentation stimulation protein homolog from Mannheimia succiniciproducens (strain KCTC 0769BP / MBEL55E).